Reading from the N-terminus, the 326-residue chain is ELAV-like protein 1 (326 aa).

S2 bears the N-acetylserine mark. S2 is modified (phosphoserine). Residues 20–98 (TNLIVNYLPQ…KTIKVSYARP (79 aa)) enclose the RRM 1 domain. 2 positions are modified to phosphoserine: S100 and S158. The region spanning 106-186 (ANLYISGLPR…EPITVKFAAN (81 aa)) is the RRM 2 domain. K191 participates in a covalent cross-link: Glycyl lysine isopeptide (Lys-Gly) (interchain with G-Cter in SUMO2). Phosphoserine is present on residues S197 and S202. R206 is modified (omega-N-methylarginine). Residue R217 is modified to Asymmetric dimethylarginine; by CARM1; alternate. R217 carries the post-translational modification Omega-N-methylarginine; alternate. S221 and S318 each carry phosphoserine. An RRM 3 domain is found at 244 to 322 (WCIFIYNLGQ…KILQVSFKTN (79 aa)).

It belongs to the RRM elav family. In terms of assembly, monomer and homodimer (in vitro). Interacts with ANP32A. Interacts with ZNF385A; the interaction is indirect and mRNA-dependent and may regulate p53/TP53 expression. Identified in a mRNP complex, at least composed of DHX9, DDX3X, ELAVL1, HNRNPU, IGF2BP1, ILF3, PABPC1, PCBP2, PTBP2, STAU1, STAU2, SYNCRIP and YBX1. Interacts with AGO1 and AGO2. Interacts with IGF2BP1; the interaction is enhanced by SEPIN14P20 peptide RBPR. Interacts with IGF2BP2 and IGF2BP3. Interacts with HNRNPL. Interacts with DHX36; this interaction occurs in a RNA-dependent manner. Interacts with ILF3; this interaction occurs in a RNA-dependent manner. Interacts with PLEKHN1. Interacts with SHFL; the interaction increases in presence of RNA. Interacts with YBX1; interaction recruits ELAVL1 on C5-methylcytosine (m5C)-containing mRNAs, thereby promoting mRNA stability. Interacts with FXR1. In terms of processing, phosphorylated by MAPKAPK2. Phosphorylated by PRKCD. Post-translationally, methylated at Arg-217 by CARM1 in macrophages in response to LPS challenge. In terms of tissue distribution, ubiquitous. Detected in brain, liver, thymus and muscle.

It is found in the cytoplasm. It localises to the nucleus. The protein resides in the stress granule. The protein localises to the P-body. RNA-binding protein that binds to the 3'-UTR region of mRNAs and increases their stability. Involved in embryonic stem cell (ESC) differentiation: preferentially binds mRNAs that are not methylated by N6-methyladenosine (m6A), stabilizing them, promoting ESC differentiation. Has also been shown to be capable of binding to m6A-containing mRNAs and contributes to MYC stability by binding to m6A-containing MYC mRNAs. Binds to poly-U elements and AU-rich elements (AREs) in the 3'-UTR of target mRNAs. Binds avidly to the AU-rich element in FOS and IL3/interleukin-3 mRNAs. In the case of the FOS AU-rich element, binds to a core element of 27 nucleotides that contain AUUUA, AUUUUA, and AUUUUUA motifs. Binds preferentially to the 5'-UUUU[AG]UUU-3' motif in vitro. With ZNF385A, binds the 3'-UTR of p53/TP53 mRNA to control their nuclear export induced by CDKN2A. Hence, may regulate p53/TP53 expression and mediate in part the CDKN2A anti-proliferative activity. May also bind with ZNF385A the CCNB1 mRNA. Increases the stability of the leptin mRNA harboring an AU-rich element (ARE) in its 3' UTR. The sequence is that of ELAV-like protein 1 (ELAVL1) from Homo sapiens (Human).